Consider the following 430-residue polypeptide: MISVYSISLGCPKNRVDTEHLLGSLGVAVQPVEHLSRADVVLINTCGFILPAVEESVRTIVETIDDLSGLRKRPLLAVAGCLVGRYGAKELASELPEVDVWLPNQDITAWPAMLAHALKLEGAVTPGRLLSTGPSYAWLKISDGCRHNCSFCTIPSIRGGHRSTPADVLEREARDLVAQGVRELVLVAQDVTAWGEDIGAPHGLATLLERLLPVPGLARLRLMYLYPAGLTRELLGFMRDAGAPLVPYFDVPLQHAHPDILSRMGRPFARDPRRVVERVRDFFPDAALRTSLIVGFPGETDEHYAALTSFVEETRFTHMGVFAYRAEEGTPAAEMPEQVEDRVKEWRRDALMEVQAEISEELLAVHEGTRQQVLVDAPHEEWPGLHTGRTWFQAPEIDGITYVSGPGVEPGALVEADIVETRTYDLVALA.

Positions 2-119 (ISVYSISLGC…WPAMLAHALK (118 aa)) constitute an MTTase N-terminal domain. Residues C11, C46, C81, C145, C149, and C152 each coordinate [4Fe-4S] cluster. The region spanning 131 to 361 (STGPSYAWLK…MEVQAEISEE (231 aa)) is the Radical SAM core domain. Residues 364 to 430 (AVHEGTRQQV…TRTYDLVALA (67 aa)) enclose the TRAM domain.

Belongs to the methylthiotransferase family. RimO subfamily. Requires [4Fe-4S] cluster as cofactor.

It localises to the cytoplasm. The enzyme catalyses L-aspartate(89)-[ribosomal protein uS12]-hydrogen + (sulfur carrier)-SH + AH2 + 2 S-adenosyl-L-methionine = 3-methylsulfanyl-L-aspartate(89)-[ribosomal protein uS12]-hydrogen + (sulfur carrier)-H + 5'-deoxyadenosine + L-methionine + A + S-adenosyl-L-homocysteine + 2 H(+). Its function is as follows. Catalyzes the methylthiolation of an aspartic acid residue of ribosomal protein uS12. The chain is Ribosomal protein uS12 methylthiotransferase RimO from Nitratidesulfovibrio vulgaris (strain ATCC 29579 / DSM 644 / CCUG 34227 / NCIMB 8303 / VKM B-1760 / Hildenborough) (Desulfovibrio vulgaris).